A 220-amino-acid chain; its full sequence is ATP synthase F(0) complex subunit a (220 aa).

A run of 6 helical transmembrane segments spans residues 12-32 (PTLL…TLLP), 69-89 (WAMI…FTPT), 91-111 (QLSL…LLGL), 130-150 (LLIP…PFAL), 158-178 (LTAG…LLPM), and 183-203 (ALLT…VAMI).

This sequence belongs to the ATPase A chain family. As to quaternary structure, component of the ATP synthase complex composed at least of ATP5F1A/subunit alpha, ATP5F1B/subunit beta, ATP5MC1/subunit c (homooctomer), MT-ATP6/subunit a, MT-ATP8/subunit 8, ATP5ME/subunit e, ATP5MF/subunit f, ATP5MG/subunit g, ATP5MK/subunit k, ATP5MJ/subunit j, ATP5F1C/subunit gamma, ATP5F1D/subunit delta, ATP5F1E/subunit epsilon, ATP5PF/subunit F6, ATP5PB/subunit b, ATP5PD/subunit d, ATP5PO/subunit OSCP. ATP synthase complex consists of a soluble F(1) head domain (subunits alpha(3) and beta(3)) - the catalytic core - and a membrane F(0) domain - the membrane proton channel (subunits c, a, 8, e, f, g, k and j). These two domains are linked by a central stalk (subunits gamma, delta, and epsilon) rotating inside the F1 region and a stationary peripheral stalk (subunits F6, b, d, and OSCP). Interacts with DNAJC30; interaction is direct.

Its subcellular location is the mitochondrion inner membrane. The catalysed reaction is H(+)(in) = H(+)(out). Subunit a, of the mitochondrial membrane ATP synthase complex (F(1)F(0) ATP synthase or Complex V) that produces ATP from ADP in the presence of a proton gradient across the membrane which is generated by electron transport complexes of the respiratory chain. ATP synthase complex consist of a soluble F(1) head domain - the catalytic core - and a membrane F(1) domain - the membrane proton channel. These two domains are linked by a central stalk rotating inside the F(1) region and a stationary peripheral stalk. During catalysis, ATP synthesis in the catalytic domain of F(1) is coupled via a rotary mechanism of the central stalk subunits to proton translocation. With the subunit c (ATP5MC1), forms the proton-conducting channel in the F(0) domain, that contains two crucial half-channels (inlet and outlet) that facilitate proton movement from the mitochondrial intermembrane space (IMS) into the matrix. Protons are taken up via the inlet half-channel and released through the outlet half-channel, following a Grotthuss mechanism. In Latimeria chalumnae (Coelacanth), this protein is ATP synthase F(0) complex subunit a.